We begin with the raw amino-acid sequence, 183 residues long: GTP cyclohydrolase 1 (183 aa).

Residues Cys-71, His-74, and Cys-142 each coordinate Zn(2+).

It belongs to the GTP cyclohydrolase I family. As to quaternary structure, homomer.

It carries out the reaction GTP + H2O = 7,8-dihydroneopterin 3'-triphosphate + formate + H(+). Its pathway is cofactor biosynthesis; 7,8-dihydroneopterin triphosphate biosynthesis; 7,8-dihydroneopterin triphosphate from GTP: step 1/1. The polypeptide is GTP cyclohydrolase 1 (Leptospira biflexa serovar Patoc (strain Patoc 1 / Ames)).